The sequence spans 265 residues: 4-hydroxy-tetrahydrodipicolinate reductase (265 aa).

NAD(+) contacts are provided by residues 7–12 (GASGRM), aspartate 33, 96–98 (GTT), and 120–123 (AANF). The active-site Proton donor/acceptor is histidine 153. Position 154 (histidine 154) interacts with (S)-2,3,4,5-tetrahydrodipicolinate. The Proton donor role is filled by lysine 157. 163–164 (GT) is a binding site for (S)-2,3,4,5-tetrahydrodipicolinate.

This sequence belongs to the DapB family.

It localises to the cytoplasm. The catalysed reaction is (S)-2,3,4,5-tetrahydrodipicolinate + NAD(+) + H2O = (2S,4S)-4-hydroxy-2,3,4,5-tetrahydrodipicolinate + NADH + H(+). It carries out the reaction (S)-2,3,4,5-tetrahydrodipicolinate + NADP(+) + H2O = (2S,4S)-4-hydroxy-2,3,4,5-tetrahydrodipicolinate + NADPH + H(+). It participates in amino-acid biosynthesis; L-lysine biosynthesis via DAP pathway; (S)-tetrahydrodipicolinate from L-aspartate: step 4/4. Catalyzes the conversion of 4-hydroxy-tetrahydrodipicolinate (HTPA) to tetrahydrodipicolinate. The protein is 4-hydroxy-tetrahydrodipicolinate reductase of Cupriavidus taiwanensis (strain DSM 17343 / BCRC 17206 / CCUG 44338 / CIP 107171 / LMG 19424 / R1) (Ralstonia taiwanensis (strain LMG 19424)).